A 300-amino-acid polypeptide reads, in one-letter code: Ribosomal protein L11 methyltransferase (300 aa).

The S-adenosyl-L-methionine site is built by Thr-152, Gly-173, Asp-195, and Asn-234.

The protein belongs to the methyltransferase superfamily. PrmA family.

Its subcellular location is the cytoplasm. The enzyme catalyses L-lysyl-[protein] + 3 S-adenosyl-L-methionine = N(6),N(6),N(6)-trimethyl-L-lysyl-[protein] + 3 S-adenosyl-L-homocysteine + 3 H(+). Methylates ribosomal protein L11. In Burkholderia pseudomallei (strain 1710b), this protein is Ribosomal protein L11 methyltransferase.